Here is a 275-residue protein sequence, read N- to C-terminus: 5'-nucleotidase SurE (275 aa).

Residues Asp-12, Asp-13, Ser-44, and Asn-102 each coordinate a divalent metal cation.

The protein belongs to the SurE nucleotidase family. The cofactor is a divalent metal cation.

The protein localises to the cytoplasm. It carries out the reaction a ribonucleoside 5'-phosphate + H2O = a ribonucleoside + phosphate. Functionally, nucleotidase that shows phosphatase activity on nucleoside 5'-monophosphates. This chain is 5'-nucleotidase SurE, found in Synechococcus sp. (strain RCC307).